Here is a 603-residue protein sequence, read N- to C-terminus: Phosphoenolpyruvate carboxykinase [GTP] (603 aa).

Residues arginine 87 and 209 to 211 (YAG) each bind substrate. Mn(2+) contacts are provided by lysine 218 and histidine 237. Serine 258 contacts substrate. 259–264 (GSGKTS) is a GTP binding site. Serine 260 is an active-site residue. Aspartate 275 provides a ligand contact to Mn(2+). Residue 365–367 (NAR) participates in substrate binding. Residues arginine 367 and arginine 398 each coordinate GTP.

Belongs to the phosphoenolpyruvate carboxykinase [GTP] family. Mn(2+) is required as a cofactor.

It localises to the cytoplasm. The enzyme catalyses oxaloacetate + GTP = phosphoenolpyruvate + GDP + CO2. It participates in carbohydrate biosynthesis; gluconeogenesis. Functionally, catalyzes the conversion of oxaloacetate (OAA) to phosphoenolpyruvate (PEP), the rate-limiting step in the metabolic pathway that produces glucose from lactate and other precursors derived from the citric acid cycle. This Saccharolobus solfataricus (strain ATCC 35092 / DSM 1617 / JCM 11322 / P2) (Sulfolobus solfataricus) protein is Phosphoenolpyruvate carboxykinase [GTP].